Consider the following 354-residue polypeptide: NADH-quinone oxidoreductase subunit H (354 aa).

8 helical membrane-spanning segments follow: residues 22-42, 91-111, 124-144, 168-188, 203-223, 255-275, 291-311, and 326-346; these read ILIR…YLIL, YLIA…VIPF, LLYV…AGWA, MGFA…SAIV, ILSW…ISGV, LFFL…ALMF, IPGF…FIWI, and LGWK…AIWI.

It belongs to the complex I subunit 1 family. As to quaternary structure, NDH-1 is composed of 14 different subunits. Subunits NuoA, H, J, K, L, M, N constitute the membrane sector of the complex.

The protein localises to the cell inner membrane. It catalyses the reaction a quinone + NADH + 5 H(+)(in) = a quinol + NAD(+) + 4 H(+)(out). Its function is as follows. NDH-1 shuttles electrons from NADH, via FMN and iron-sulfur (Fe-S) centers, to quinones in the respiratory chain. The immediate electron acceptor for the enzyme in this species is believed to be ubiquinone. Couples the redox reaction to proton translocation (for every two electrons transferred, four hydrogen ions are translocated across the cytoplasmic membrane), and thus conserves the redox energy in a proton gradient. This subunit may bind ubiquinone. The protein is NADH-quinone oxidoreductase subunit H of Cupriavidus taiwanensis (strain DSM 17343 / BCRC 17206 / CCUG 44338 / CIP 107171 / LMG 19424 / R1) (Ralstonia taiwanensis (strain LMG 19424)).